Reading from the N-terminus, the 712-residue chain is Glycine--tRNA ligase beta subunit (712 aa).

Belongs to the class-II aminoacyl-tRNA synthetase family. As to quaternary structure, tetramer of two alpha and two beta subunits.

The protein localises to the cytoplasm. The enzyme catalyses tRNA(Gly) + glycine + ATP = glycyl-tRNA(Gly) + AMP + diphosphate. This is Glycine--tRNA ligase beta subunit from Dechloromonas aromatica (strain RCB).